The sequence spans 453 residues: Glutamyl-tRNA reductase (453 aa).

Residues 50–53 (TCNR), S110, 115–117 (EPQ), and Q121 contribute to the substrate site. C51 functions as the Nucleophile in the catalytic mechanism. 190–195 (GAGEMA) lines the NADP(+) pocket. Residues 423 to 436 (REKVPTDAHADRKP) show a composition bias toward basic and acidic residues. The disordered stretch occupies residues 423 to 453 (REKVPTDAHADRKPPNFAETSDDFDVTDASE). Residues 442-453 (TSDDFDVTDASE) are compositionally biased toward acidic residues.

Belongs to the glutamyl-tRNA reductase family. Homodimer.

It catalyses the reaction (S)-4-amino-5-oxopentanoate + tRNA(Glu) + NADP(+) = L-glutamyl-tRNA(Glu) + NADPH + H(+). It participates in porphyrin-containing compound metabolism; protoporphyrin-IX biosynthesis; 5-aminolevulinate from L-glutamyl-tRNA(Glu): step 1/2. Catalyzes the NADPH-dependent reduction of glutamyl-tRNA(Glu) to glutamate 1-semialdehyde (GSA). In Solidesulfovibrio magneticus (strain ATCC 700980 / DSM 13731 / RS-1) (Desulfovibrio magneticus), this protein is Glutamyl-tRNA reductase.